Consider the following 1171-residue polypeptide: DNA-directed RNA polymerase subunit beta (1171 aa).

This sequence belongs to the RNA polymerase beta chain family. The RNAP catalytic core consists of 2 alpha, 1 beta, 1 beta' and 1 omega subunit. When a sigma factor is associated with the core the holoenzyme is formed, which can initiate transcription.

The enzyme catalyses RNA(n) + a ribonucleoside 5'-triphosphate = RNA(n+1) + diphosphate. DNA-dependent RNA polymerase catalyzes the transcription of DNA into RNA using the four ribonucleoside triphosphates as substrates. In Arthrobacter sp. (strain FB24), this protein is DNA-directed RNA polymerase subunit beta.